Here is a 483-residue protein sequence, read N- to C-terminus: Probable glycine dehydrogenase (decarboxylating) subunit 2 (483 aa).

The interval methionine 1 to leucine 24 is disordered. Lysine 264 bears the N6-(pyridoxal phosphate)lysine mark.

It belongs to the GcvP family. C-terminal subunit subfamily. In terms of assembly, the glycine cleavage system is composed of four proteins: P, T, L and H. In this organism, the P 'protein' is a heterodimer of two subunits. Pyridoxal 5'-phosphate serves as cofactor.

It carries out the reaction N(6)-[(R)-lipoyl]-L-lysyl-[glycine-cleavage complex H protein] + glycine + H(+) = N(6)-[(R)-S(8)-aminomethyldihydrolipoyl]-L-lysyl-[glycine-cleavage complex H protein] + CO2. The glycine cleavage system catalyzes the degradation of glycine. The P protein binds the alpha-amino group of glycine through its pyridoxal phosphate cofactor; CO(2) is released and the remaining methylamine moiety is then transferred to the lipoamide cofactor of the H protein. The sequence is that of Probable glycine dehydrogenase (decarboxylating) subunit 2 from Thiobacillus denitrificans (strain ATCC 25259 / T1).